Consider the following 96-residue polypeptide: Co-chaperonin GroES (96 aa).

It belongs to the GroES chaperonin family. Heptamer of 7 subunits arranged in a ring. Interacts with the chaperonin GroEL.

It is found in the cytoplasm. Its function is as follows. Together with the chaperonin GroEL, plays an essential role in assisting protein folding. The GroEL-GroES system forms a nano-cage that allows encapsulation of the non-native substrate proteins and provides a physical environment optimized to promote and accelerate protein folding. GroES binds to the apical surface of the GroEL ring, thereby capping the opening of the GroEL channel. The sequence is that of Co-chaperonin GroES from Caulobacter sp. (strain K31).